The sequence spans 194 residues: uncharacterized protein (194 aa).

It to A.rhizogenes plasmid pRia4B ORF-3 in virA region.

This is an uncharacterized protein from Sinorhizobium fredii (strain NBRC 101917 / NGR234).